Here is a 454-residue protein sequence, read N- to C-terminus: Phosphoglucosamine mutase (454 aa).

Ser101 functions as the Phosphoserine intermediate in the catalytic mechanism. 4 residues coordinate Mg(2+): Ser101, Asp243, Asp245, and Asp247. The residue at position 101 (Ser101) is a Phosphoserine.

It belongs to the phosphohexose mutase family. Mg(2+) serves as cofactor. In terms of processing, activated by phosphorylation.

The catalysed reaction is alpha-D-glucosamine 1-phosphate = D-glucosamine 6-phosphate. Catalyzes the conversion of glucosamine-6-phosphate to glucosamine-1-phosphate. In Citrifermentans bemidjiense (strain ATCC BAA-1014 / DSM 16622 / JCM 12645 / Bem) (Geobacter bemidjiensis), this protein is Phosphoglucosamine mutase.